Reading from the N-terminus, the 476-residue chain is 8-amino-7-oxononanoate synthase (476 aa).

Substrate is bound at residue arginine 24. 171-172 (GF) provides a ligand contact to pyridoxal 5'-phosphate. Histidine 210 contributes to the substrate binding site. Pyridoxal 5'-phosphate-binding positions include serine 260, 285–288 (DDAH), and 316–319 (TLSK). Lysine 319 is subject to N6-(pyridoxal phosphate)lysine. Residue threonine 427 coordinates substrate. Residues 474-476 (PKL) carry the Peroxisomal targeting signal PTS1 motif.

It belongs to the class-II pyridoxal-phosphate-dependent aminotransferase family. BioF subfamily. In terms of assembly, monomer. Pyridoxal 5'-phosphate is required as a cofactor.

It localises to the cytoplasm. The protein localises to the cytosol. The protein resides in the peroxisome. The catalysed reaction is 6-carboxyhexanoyl-[ACP] + L-alanine + H(+) = (8S)-8-amino-7-oxononanoate + holo-[ACP] + CO2. The protein operates within cofactor biosynthesis; biotin biosynthesis; 8-amino-7-oxononanoate from pimeloyl-CoA: step 1/1. Functionally, catalyzes the decarboxylative condensation of pimeloyl-[acyl-carrier protein] and L-alanine to produce 8-amino-7-oxononanoate (AON), [acyl-carrier protein], and carbon dioxide. Required for the biosynthesis of D-biotin that prevents light-mediated cell death and modulates defense gene expression, probably by avoiding hydrogen peroxide H(2)O(2) accumulation. This Arabidopsis thaliana (Mouse-ear cress) protein is 8-amino-7-oxononanoate synthase.